The following is a 428-amino-acid chain: Adenylosuccinate synthetase (428 aa).

Residues 12 to 18 and 40 to 42 each bind GTP; these read GDEGKGK and GHT. The active-site Proton acceptor is the Asp13. Mg(2+) contacts are provided by Asp13 and Gly40. Residues 13 to 16, 38 to 41, Thr128, Arg142, Gln222, Thr237, and Arg301 each bind IMP; these read DEGK and NAGH. The Proton donor role is filled by His41. 297-303 is a substrate binding site; it reads VNTGRAR. GTP-binding positions include Arg303, 329 to 331, and 411 to 413; these read KLD and STS.

This sequence belongs to the adenylosuccinate synthetase family. As to quaternary structure, homodimer. It depends on Mg(2+) as a cofactor.

It is found in the cytoplasm. The catalysed reaction is IMP + L-aspartate + GTP = N(6)-(1,2-dicarboxyethyl)-AMP + GDP + phosphate + 2 H(+). The protein operates within purine metabolism; AMP biosynthesis via de novo pathway; AMP from IMP: step 1/2. Plays an important role in the de novo pathway of purine nucleotide biosynthesis. Catalyzes the first committed step in the biosynthesis of AMP from IMP. The sequence is that of Adenylosuccinate synthetase from Caulobacter vibrioides (strain ATCC 19089 / CIP 103742 / CB 15) (Caulobacter crescentus).